The sequence spans 157 residues: 2-C-methyl-D-erythritol 2,4-cyclodiphosphate synthase (157 aa).

Residues Asp-8 and His-10 each contribute to the a divalent metal cation site. Residues 8–10 and 34–35 each bind 4-CDP-2-C-methyl-D-erythritol 2-phosphate; these read DVH and HS. His-42 serves as a coordination point for a divalent metal cation. Residues 56 to 58, 61 to 65, 100 to 106, 132 to 135, Phe-139, and Arg-142 contribute to the 4-CDP-2-C-methyl-D-erythritol 2-phosphate site; these read DIG, FPDTD, AQAPKMA, and TTTE.

Belongs to the IspF family. In terms of assembly, homotrimer. A divalent metal cation serves as cofactor.

The enzyme catalyses 4-CDP-2-C-methyl-D-erythritol 2-phosphate = 2-C-methyl-D-erythritol 2,4-cyclic diphosphate + CMP. It participates in isoprenoid biosynthesis; isopentenyl diphosphate biosynthesis via DXP pathway; isopentenyl diphosphate from 1-deoxy-D-xylulose 5-phosphate: step 4/6. Involved in the biosynthesis of isopentenyl diphosphate (IPP) and dimethylallyl diphosphate (DMAPP), two major building blocks of isoprenoid compounds. Catalyzes the conversion of 4-diphosphocytidyl-2-C-methyl-D-erythritol 2-phosphate (CDP-ME2P) to 2-C-methyl-D-erythritol 2,4-cyclodiphosphate (ME-CPP) with a corresponding release of cytidine 5-monophosphate (CMP). This Pseudomonas paraeruginosa (strain DSM 24068 / PA7) (Pseudomonas aeruginosa (strain PA7)) protein is 2-C-methyl-D-erythritol 2,4-cyclodiphosphate synthase.